Here is a 273-residue protein sequence, read N- to C-terminus: Photosystem I chlorophyll a/b-binding protein 3-1, chloroplastic (273 aa).

The N-terminal 39 residues, 1 to 39 (MAAQALVSSSLTSSVQTARQIFGSKPVASASQKKSSFVV), are a transit peptide targeting the chloroplast. Trp56 contacts chlorophyll b. Chlorophyll a-binding residues include Phe76, Ser82, and Glu100. Arg105 is a binding site for chlorophyll b. Residues 106–126 (FAMLGAAGAIAPEILGKAGLI) traverse the membrane as a helical segment. Ile140 is a chlorophyll b binding site. The chain crosses the membrane as a helical span at residues 146 to 166 (YTYWADNYTLFVLEMALMGFA). Chlorophyll b is bound by residues Glu167 and Arg170. Ser195 bears the Phosphoserine mark. Lys224, Glu225, Asn228, Arg230, Gln242, and His257 together coordinate chlorophyll a. The helical transmembrane segment at 231-251 (LAMLAILGYFIQGLVTGVGPY) threads the bilayer. Chlorophyll b is bound at residue Phe272.

The protein belongs to the light-harvesting chlorophyll a/b-binding (LHC) protein family. In terms of assembly, the LHC complex consists of chlorophyll a-b binding proteins. Red-emitting heterodimer with LHCA2. Interacts with LHCA5. Binds to carotenoids. Binds at least 14 chlorophylls (8 Chl-a and 6 Chl-b) and carotenoids such as lutein and neoxanthin. serves as cofactor. In terms of processing, photoregulated by reversible phosphorylation of its threonine residues.

Its subcellular location is the plastid. It localises to the chloroplast thylakoid membrane. Functionally, the light-harvesting complex (LHC) functions as a light receptor, it captures and delivers excitation energy to photosystems with which it is closely associated, here photosystem I. The polypeptide is Photosystem I chlorophyll a/b-binding protein 3-1, chloroplastic (Arabidopsis thaliana (Mouse-ear cress)).